Here is a 305-residue protein sequence, read N- to C-terminus: Axin interactor, dorsalization-associated protein A (305 aa).

An axin-binding region spans residues 153-220 (GTLLPRLPSE…RKEDTYVHFN (68 aa)). The C2 Aida-type domain maps to 156 to 303 (LPRLPSEPGM…LYLHLLQTLL (148 aa)).

The protein belongs to the AIDA family.

In terms of biological role, acts as a ventralizing factor during embryogenesis. Inhibits axin-mediated JNK activation by binding axin and disrupting axin homodimerization. This in turn antagonizes a Wnt/beta-catenin-independent dorsalization pathway activated by axin/JNK-signaling. In Xenopus laevis (African clawed frog), this protein is Axin interactor, dorsalization-associated protein A (aida-a).